Here is a 107-residue protein sequence, read N- to C-terminus: Flagellar transcriptional regulator FlhD (107 aa).

It belongs to the FlhD family. Homodimer; disulfide-linked. Forms a heterohexamer composed of two FlhC and four FlhD subunits. Each FlhC binds a FlhD dimer, forming a heterotrimer, and a hexamer assembles by dimerization of two heterotrimers.

The protein localises to the cytoplasm. In terms of biological role, functions in complex with FlhC as a master transcriptional regulator that regulates transcription of several flagellar and non-flagellar operons by binding to their promoter region. Activates expression of class 2 flagellar genes, including fliA, which is a flagellum-specific sigma factor that turns on the class 3 genes. Also regulates genes whose products function in a variety of physiological pathways. The polypeptide is Flagellar transcriptional regulator FlhD (Bordetella pertussis (strain Tohama I / ATCC BAA-589 / NCTC 13251)).